The following is a 105-amino-acid chain: Heme oxygenase (mycobilin-producing) (105 aa).

One can recognise an ABM domain in the interval 3-92 (VVKINAIEVP…VATGASLLEF (90 aa)). Heme contacts are provided by residues 22–26 (RFAHR), H75, and 83–86 (VATG).

The protein belongs to the antibiotic biosynthesis monooxygenase family. Homodimer.

It catalyses the reaction heme b + 3 AH2 + 3 O2 + 2 H(+) = mycobilin a + Fe(2+) + 3 A + 3 H2O. The catalysed reaction is heme b + 3 AH2 + 3 O2 + 2 H(+) = mycobilin b + Fe(2+) + 3 A + 3 H2O. In terms of biological role, catalyzes the oxidative degradation of the heme macrocyclic porphyrin ring in the presence of a suitable electron donor such as ascorbate or NADPH--cytochrome P450 reductase, with subsequent release of free iron. The sequence is that of Heme oxygenase (mycobilin-producing) (mhuD) from Mycobacterium tuberculosis (strain CDC 1551 / Oshkosh).